We begin with the raw amino-acid sequence, 27 residues long: Equinin A (27 aa).

Basic and acidic residues predominate over residues 1 to 13; it reads AVDKGGGKAEKKD. A disordered region spans residues 1–27; that stretch reads AVDKGGGKAEKKDGNRKKKLAGGEGGG.

The protein resides in the secreted. Peptide with unknown function. Does not show antimicrobial and hemolytic activities. The protein is Equinin A of Actinia equina (Beadlet anemone).